We begin with the raw amino-acid sequence, 114 residues long: Iron-sulfur cluster insertion protein ErpA (114 aa).

The iron-sulfur cluster site is built by cysteine 42, cysteine 106, and cysteine 108.

Belongs to the HesB/IscA family. In terms of assembly, homodimer. Iron-sulfur cluster serves as cofactor.

In terms of biological role, required for insertion of 4Fe-4S clusters for at least IspG. The polypeptide is Iron-sulfur cluster insertion protein ErpA (Klebsiella pneumoniae subsp. pneumoniae (strain ATCC 700721 / MGH 78578)).